A 321-amino-acid polypeptide reads, in one-letter code: Porin Omp2a (321 aa).

The N-terminal stretch at 1-22 (MNIKSLLLGSAAALVAASGAQA) is a signal peptide.

The protein belongs to the alphaproteobacteria porin family. In terms of assembly, monomer.

It localises to the cell outer membrane. Forms passive diffusion pores that allow small molecular weight hydrophilic materials across the outer membrane. The protein is Porin Omp2a (omp2a) of Brucella abortus (strain S19).